A 27-amino-acid polypeptide reads, in one-letter code: Equinin A (27 aa).

The segment covering 1–13 has biased composition (basic and acidic residues); sequence AVDKGGGKAEKKD. The tract at residues 1–27 is disordered; the sequence is AVDKGGGKAEKKDGNRKKKLAGGEGGG.

It is found in the secreted. Peptide with unknown function. Does not show antimicrobial and hemolytic activities. This Actinia equina (Beadlet anemone) protein is Equinin A.